The chain runs to 953 residues: GATA zinc finger domain-containing protein 14 (953 aa).

A compositionally biased stretch (polar residues) spans 1-21 (MFEKIPNQNSHSMGDNNTGYY). 2 disordered regions span residues 1-109 (MFEK…SPNR) and 216-756 (TYGS…TQPQ). Low complexity predominate over residues 22–89 (NNNNNNNNNN…QLPSPQLSQP (68 aa)). Positions 90–109 (NSMNTTPNQTSPNLRSSPNR) are enriched in polar residues. Low complexity-rich tracts occupy residues 219-330 (SSNT…VNAN), 342-683 (NIYN…PNSS), and 690-756 (GNNG…TQPQ). The segment at 893 to 918 (CTSCGTTQTPEWRKGPAGGKSLCNAC) adopts a GATA-type zinc-finger fold. Positions 934–953 (KVETTSSPPSTSMNVVNLLN) are disordered.

This chain is GATA zinc finger domain-containing protein 14 (gtaN), found in Dictyostelium discoideum (Social amoeba).